A 106-amino-acid chain; its full sequence is MLLGRRLAAMTELLKSVDYEVFGTVQGVCFRMYTEGEAKKRGLVGWVKNTSKGTVTGQVQGPEEKVDAMKSWLSKVGSPSSRIDRADFSNEKTISKLEYSDFSIRY.

The Acylphosphatase-like domain maps to 16 to 106 (SVDYEVFGTV…LEYSDFSIRY (91 aa)). Active-site residues include Arg-31 and Asn-49. At Ser-100 the chain carries Phosphoserine.

Belongs to the acylphosphatase family.

The enzyme catalyses an acyl phosphate + H2O = a carboxylate + phosphate + H(+). This chain is Acylphosphatase-2 (Acyp2), found in Mus musculus (Mouse).